The sequence spans 975 residues: MKLEHPDRLMNRTPLSLAALETHDAFAERHIGPDAASQQAMLDTLGFASRAALIDAVIPASIRRAETLPLGPFAQPKSEAEALAALRVLADKNEVFRSYIGQGYHDTHTPAVILRNVLENPAWYTAYTPYQPEISQGRLEALLNFQQMVADLTGLAISNASLLDEATAAAEAMTLLQRTGKPTSNVFYVADDVLPQTLEVIRTRALPVGIEVKTGPAADAAQANAFGVLLQYPGVNGDVRDYRALTEAIHAAGGHVVVAADLLALTVLTPPGDWGADVAIGNTQRFGVPMGFGGPHAAYLAVRDEFKRQMPGRLVGVTVDAQGKPALRLALQTREQHIRREKATSNVCTAQALLAIMASMYAVYHGPHGLKTIALRVNRIAALLAAGVKQLGFATVNDTFFDTLTIDTGARTAQVHEFAKAKRINLRRVSDTQVGVSVDETTTRDDLADLLAVFAQAAGGTAPAVDALDAGLAGVAALPAGLERTSAYLTHHVFNRHHSETEMLRYLRSLSDKDLALDRSMIPLGSCTMKLNATSEMLPVTWPEFGGIHPFAPAEQTVGYREMIDQLEQMLVAATGYAAVSLQPNAGSQGEYAGLLIIHAYHASRGEAHRDVCLIPASAHGTNPASAHMAGMKVVVVACDAQGNVDIADLKAKADEHAKDLAAIMITYPSTHGVFEQNVREICEIVHAHGGQVYVDGANMNAMVGLTAPGQFGGDVSHLNLHKTFCIPHGGGGPGVGPVAVGAHLAKFLPNQRSTGYTREEDGIGAVSAAPYGSASILPISWMYIAMMGAKNLTAATETAILNANYIAKRLAPHYPVLYSGPGGLVAHECILDLRPIKESSGISVDDVAKRLMDYGFHAPTMSFPVPGTLMVEPTESESQEELDRFIAAMIAIRDEIRAVEEGRADREDNPLRHAPHTAAVVTANEWLHAYSREQAAYPVASLGTNKYWPPVGRADNVYGDRNLFCSCVPMSEYA.

Position 723 is an N6-(pyridoxal phosphate)lysine (lysine 723).

It belongs to the GcvP family. The glycine cleavage system is composed of four proteins: P, T, L and H. The cofactor is pyridoxal 5'-phosphate.

The enzyme catalyses N(6)-[(R)-lipoyl]-L-lysyl-[glycine-cleavage complex H protein] + glycine + H(+) = N(6)-[(R)-S(8)-aminomethyldihydrolipoyl]-L-lysyl-[glycine-cleavage complex H protein] + CO2. The glycine cleavage system catalyzes the degradation of glycine. The P protein binds the alpha-amino group of glycine through its pyridoxal phosphate cofactor; CO(2) is released and the remaining methylamine moiety is then transferred to the lipoamide cofactor of the H protein. The polypeptide is Glycine dehydrogenase (decarboxylating) (Burkholderia lata (strain ATCC 17760 / DSM 23089 / LMG 22485 / NCIMB 9086 / R18194 / 383)).